The chain runs to 70 residues: ATP synthase subunit c (70 aa).

2 helical membrane-spanning segments follow: residues 4–24 (IAAGIAAGLAAVGAGVGNGLV) and 47–67 (FLGVGLIEALPILSIVIAFLV).

This sequence belongs to the ATPase C chain family. In terms of assembly, F-type ATPases have 2 components, F(1) - the catalytic core - and F(0) - the membrane proton channel. F(1) has five subunits: alpha(3), beta(3), gamma(1), delta(1), epsilon(1). F(0) has three main subunits: a(1), b(2) and c(10-14). The alpha and beta chains form an alternating ring which encloses part of the gamma chain. F(1) is attached to F(0) by a central stalk formed by the gamma and epsilon chains, while a peripheral stalk is formed by the delta and b chains.

It is found in the cell membrane. Its function is as follows. F(1)F(0) ATP synthase produces ATP from ADP in the presence of a proton or sodium gradient. F-type ATPases consist of two structural domains, F(1) containing the extramembraneous catalytic core and F(0) containing the membrane proton channel, linked together by a central stalk and a peripheral stalk. During catalysis, ATP synthesis in the catalytic domain of F(1) is coupled via a rotary mechanism of the central stalk subunits to proton translocation. Functionally, key component of the F(0) channel; it plays a direct role in translocation across the membrane. A homomeric c-ring of between 10-14 subunits forms the central stalk rotor element with the F(1) delta and epsilon subunits. The sequence is that of ATP synthase subunit c from Limosilactobacillus fermentum (strain NBRC 3956 / LMG 18251) (Lactobacillus fermentum).